A 185-amino-acid polypeptide reads, in one-letter code: MLKIRLARGGAKKRPYYSIVVADSHSPRDGRFIEKVGTYNPLLKKDDAARVTLKVESIQAWLAKGAQPTDRVARFLAAQGLVQWTHGNNPEKAKPGKKAQERDAERTQRDADRVAAEAQAKEDAKAAAAEAAEAAAAAAAEAAAAPAPEPEVVAEEAPVEAAAEEAPAAEAAAEEAPASEETTEG.

The interval 83 to 185 (QWTHGNNPEK…APASEETTEG (103 aa)) is disordered. The segment covering 89-125 (NPEKAKPGKKAQERDAERTQRDADRVAAEAQAKEDAK) has biased composition (basic and acidic residues). Composition is skewed to low complexity over residues 126–146 (AAAA…AAAP) and 159–176 (VEAA…AEEA).

Belongs to the bacterial ribosomal protein bS16 family.

This is Small ribosomal subunit protein bS16 from Caulobacter sp. (strain K31).